A 155-amino-acid polypeptide reads, in one-letter code: Transcriptional repressor NrdR (155 aa).

Over residues 1–11 the composition is skewed to polar residues; sequence MECPNCHQNAS. A disordered region spans residues 1–22; the sequence is MECPNCHQNASRVIDSRPSDEN. The segment at 3–34 is a zinc-finger region; it reads CPNCHQNASRVIDSRPSDENRAIRRRRECENC. Residues 49-139 enclose the ATP-cone domain; sequence LLVVKNDGTR…IYREFKDMSS (91 aa).

It belongs to the NrdR family. Zn(2+) serves as cofactor.

In terms of biological role, negatively regulates transcription of bacterial ribonucleotide reductase nrd genes and operons by binding to NrdR-boxes. This is Transcriptional repressor NrdR from Lactobacillus acidophilus (strain ATCC 700396 / NCK56 / N2 / NCFM).